The following is a 134-amino-acid chain: Interleukin-5 (134 aa).

The N-terminal stretch at 1–19 (MRMLLHLSLLALGAAYVSA) is a signal peptide. 2 N-linked (GlcNAc...) asparagine glycosylation sites follow: Asn76 and Asn90.

The protein belongs to the IL-5 family. In terms of assembly, homodimer; disulfide-linked. Interacts with IL5RA. Interacts with CSF2RB.

The protein resides in the secreted. Its function is as follows. Homodimeric cytokine expressed predominantly by T-lymphocytes and NK cells that plays an important role in the survival, differentiation, and chemotaxis of eosinophils. Also acts on activated and resting B-cells to induce immunoglobulin production, growth, and differentiation. Mechanistically, exerts its biological effects through a receptor composed of IL5RA subunit and the cytokine receptor common subunit beta/CSF2RB. Binding to the receptor leads to activation of various kinases including LYN, SYK and JAK2 and thereby propagates signals through the RAS-MAPK and JAK-STAT5 pathways respectively. The chain is Interleukin-5 (IL5) from Felis catus (Cat).